Here is a 417-residue protein sequence, read N- to C-terminus: Glutamyl-tRNA reductase (417 aa).

Substrate is bound by residues 49-52 (TCNR), serine 107, 112-114 (EEQ), and glutamine 118. Residue cysteine 50 is the Nucleophile of the active site. Residue 187–192 (GTGEVS) participates in NADP(+) binding.

This sequence belongs to the glutamyl-tRNA reductase family. Homodimer.

It carries out the reaction (S)-4-amino-5-oxopentanoate + tRNA(Glu) + NADP(+) = L-glutamyl-tRNA(Glu) + NADPH + H(+). The protein operates within porphyrin-containing compound metabolism; protoporphyrin-IX biosynthesis; 5-aminolevulinate from L-glutamyl-tRNA(Glu): step 1/2. Its function is as follows. Catalyzes the NADPH-dependent reduction of glutamyl-tRNA(Glu) to glutamate 1-semialdehyde (GSA). In Cenarchaeum symbiosum (strain A), this protein is Glutamyl-tRNA reductase.